The primary structure comprises 292 residues: MTFQDLILSLQGYWAKQGCIIQQPYDTEKGAGTFNPATFLRVLGPEPWNVAYVEPSRRPTDGRYGENPNRLQHYYQFQVIMKPSPLNILDRYLDSLRAFGLDPCKHDIRFVEDDWESPTLGAWGLGWEVWLDGMEITQFTYFQQAGGIDLKPVSSEITYGCERIAMYLQGVDNVYDLEWVKGIKYGDIHHESEVEFSKYNFEEADVDMLLKLFGMYEKECLRLVERDLVLPAYDYVMKCSHAFNLLDARGAISVTERASYIGRVRNVARVCAEGYLRMRERLGFPLLKGGVA.

The protein belongs to the class-II aminoacyl-tRNA synthetase family. Tetramer of two alpha and two beta subunits.

It localises to the cytoplasm. The enzyme catalyses tRNA(Gly) + glycine + ATP = glycyl-tRNA(Gly) + AMP + diphosphate. This chain is Glycine--tRNA ligase alpha subunit, found in Pelobacter propionicus (strain DSM 2379 / NBRC 103807 / OttBd1).